Here is a 58-residue protein sequence, read N- to C-terminus: MALPKHKKSKSKRDKRRTHQKLTAPNVVSCPQCGDPKLPHHICPSCGTYKGRTLIETD.

Positions 1 to 20 (MALPKHKKSKSKRDKRRTHQ) are enriched in basic residues. The tract at residues 1–26 (MALPKHKKSKSKRDKRRTHQKLTAPN) is disordered.

The protein belongs to the bacterial ribosomal protein bL32 family.

The sequence is that of Large ribosomal subunit protein bL32 from Desulfatibacillum aliphaticivorans.